The chain runs to 342 residues: Phosphate acyltransferase (342 aa).

Belongs to the PlsX family. In terms of assembly, homodimer. Probably interacts with PlsY.

It is found in the cytoplasm. It catalyses the reaction a fatty acyl-[ACP] + phosphate = an acyl phosphate + holo-[ACP]. The protein operates within lipid metabolism; phospholipid metabolism. Functionally, catalyzes the reversible formation of acyl-phosphate (acyl-PO(4)) from acyl-[acyl-carrier-protein] (acyl-ACP). This enzyme utilizes acyl-ACP as fatty acyl donor, but not acyl-CoA. This is Phosphate acyltransferase from Shewanella sediminis (strain HAW-EB3).